The following is a 187-amino-acid chain: Resolvase OPG149 (187 aa).

It belongs to the RuvC family. Poxviruses-type subfamily. Mg(2+) serves as cofactor.

Plays a role in DNA replication by cleaving viral DNA concatamers to yield unit-length viral genomes. The concatamer junctions contain inverted repeat sequences that can be extruded as cruciforms, yielding Holliday junctions that A22 protein cleaves. This is Resolvase OPG149 (OPG149) from Variola virus (isolate Human/India/Ind3/1967) (VARV).